We begin with the raw amino-acid sequence, 431 residues long: Levansucrase LscC (431 aa).

The sucrose site is built by Trp61, Asp62, Ala148, Arg218, and Asp219. The active-site Nucleophile is the Asp62. Residue Glu303 is the Proton donor/acceptor of the active site.

Belongs to the glycosyl hydrolase 68 family.

The protein resides in the periplasm. The enzyme catalyses [6)-beta-D-fructofuranosyl-(2-&gt;](n) alpha-D-glucopyranoside + sucrose = [6)-beta-D-fructofuranosyl-(2-&gt;](n+1) alpha-D-glucopyranoside + D-glucose. Catalyzes the synthesis of levan, a fructose polymer, by transferring the fructosyl moiety from sucrose to a growing acceptor molecule. This chain is Levansucrase LscC, found in Pseudomonas savastanoi pv. glycinea (Pseudomonas syringae pv. glycinea).